Here is a 696-residue protein sequence, read N- to C-terminus: Polyribonucleotide nucleotidyltransferase (696 aa).

Aspartate 486 and aspartate 492 together coordinate Mg(2+). The KH domain maps to 553 to 612; that stretch reads PRIIVRNIPKDRIGELIGPGGKNVRGISELTGAELYIEDDGRVTISGSNQESAEKAAKMV. The region spanning 622 to 690 is the S1 motif domain; sequence GKIYEGKVKR…KTGKIDLSRK (69 aa).

This sequence belongs to the polyribonucleotide nucleotidyltransferase family. Requires Mg(2+) as cofactor.

It localises to the cytoplasm. It catalyses the reaction RNA(n+1) + phosphate = RNA(n) + a ribonucleoside 5'-diphosphate. In terms of biological role, involved in mRNA degradation. Catalyzes the phosphorolysis of single-stranded polyribonucleotides processively in the 3'- to 5'-direction. This Leptospira borgpetersenii serovar Hardjo-bovis (strain JB197) protein is Polyribonucleotide nucleotidyltransferase.